The following is a 337-amino-acid chain: MRILGIESSCDETGIAIYDDEKGLLAHQLYSQVKVHADYGGVVPELASRDHVRKTLPLIDAAFAQAGCGPEDLDGVAYTAGPGLVGALLVGTSIGRSLAYGWDIPAVAVHHMEGHLLAPMLEENVPEFPFIALLVSGGHTMMVKVAGIGQYEVLGESVDDAAGEAFDKTAKLLGLDYPGGPRLAKMAEQGVAKRFIFPRPMTDKPGLDFSFSGLKTAASITIRENNDDEQTKADIAHAFQTAVIDTLVIKCKRALKQTGIKRLVIAGGVSANTQLRLQLERVMQGMKGQVYYPRTEFCTDNGAMIAYAGMQRLKAGQFATLDMKTKPRWPIDSLEAI.

Positions 111 and 115 each coordinate Fe cation. Substrate-binding positions include 134–138 (LVSGG), D167, G180, and N272. D300 provides a ligand contact to Fe cation.

This sequence belongs to the KAE1 / TsaD family. Fe(2+) serves as cofactor.

It localises to the cytoplasm. The enzyme catalyses L-threonylcarbamoyladenylate + adenosine(37) in tRNA = N(6)-L-threonylcarbamoyladenosine(37) in tRNA + AMP + H(+). Functionally, required for the formation of a threonylcarbamoyl group on adenosine at position 37 (t(6)A37) in tRNAs that read codons beginning with adenine. Is involved in the transfer of the threonylcarbamoyl moiety of threonylcarbamoyl-AMP (TC-AMP) to the N6 group of A37, together with TsaE and TsaB. TsaD likely plays a direct catalytic role in this reaction. This is tRNA N6-adenosine threonylcarbamoyltransferase from Pseudoalteromonas translucida (strain TAC 125).